The chain runs to 139 residues: MERTLSIVKPDGVERGLIGEVVRRLEKEGLKIIAMKMIHMTRAQAEGFYAVHRERPFFESLTTFMSSGPVVVMVLEGEDAILRYRTLMGATNYKDAAEGTIRRDFATEIERNVVHGSDAPDTAAFEIGYFFNSFEIMGR.

6 residues coordinate ATP: lysine 9, phenylalanine 57, arginine 85, threonine 91, arginine 102, and asparagine 112. The Pros-phosphohistidine intermediate role is filled by histidine 115.

This sequence belongs to the NDK family. In terms of assembly, homotetramer. The cofactor is Mg(2+).

The protein resides in the cytoplasm. The enzyme catalyses a 2'-deoxyribonucleoside 5'-diphosphate + ATP = a 2'-deoxyribonucleoside 5'-triphosphate + ADP. It carries out the reaction a ribonucleoside 5'-diphosphate + ATP = a ribonucleoside 5'-triphosphate + ADP. Its function is as follows. Major role in the synthesis of nucleoside triphosphates other than ATP. The ATP gamma phosphate is transferred to the NDP beta phosphate via a ping-pong mechanism, using a phosphorylated active-site intermediate. This Desulfosudis oleivorans (strain DSM 6200 / JCM 39069 / Hxd3) (Desulfococcus oleovorans) protein is Nucleoside diphosphate kinase.